A 187-amino-acid polypeptide reads, in one-letter code: uncharacterized protein (187 aa).

Residues 139–168 (ESKDRKALKNAARKAEKNAHEESSYFRVDD) show a composition bias toward basic and acidic residues. The segment at 139 to 172 (ESKDRKALKNAARKAEKNAHEESSYFRVDDPEPE) is disordered.

This is an uncharacterized protein from Caenorhabditis elegans.